The primary structure comprises 353 residues: Nicotinate-nucleotide--dimethylbenzimidazole phosphoribosyltransferase (353 aa).

Glu319 (proton acceptor) is an active-site residue.

It belongs to the CobT family.

The enzyme catalyses 5,6-dimethylbenzimidazole + nicotinate beta-D-ribonucleotide = alpha-ribazole 5'-phosphate + nicotinate + H(+). It functions in the pathway nucleoside biosynthesis; alpha-ribazole biosynthesis; alpha-ribazole from 5,6-dimethylbenzimidazole: step 1/2. Catalyzes the synthesis of alpha-ribazole-5'-phosphate from nicotinate mononucleotide (NAMN) and 5,6-dimethylbenzimidazole (DMB). This Prosthecochloris aestuarii (strain DSM 271 / SK 413) protein is Nicotinate-nucleotide--dimethylbenzimidazole phosphoribosyltransferase.